Reading from the N-terminus, the 75-residue chain is UPF0512 protein D (75 aa).

The tract at residues methionine 1–serine 20 is disordered.

Belongs to the UPF0512 family.

This Dictyostelium discoideum (Social amoeba) protein is UPF0512 protein D.